Here is a 412-residue protein sequence, read N- to C-terminus: Alpha-1-antiproteinase (412 aa).

The signal sequence occupies residues 1–24 (MTPSISWGLLLLAGLFCLVPSFLA). Ser-33 bears the Phosphoserine mark. N-linked (GlcNAc...) asparagine glycans are attached at residues Asn-100, Asn-133, Asn-264, and Asn-313. Positions 367-386 (AATVLQAVPMSMPPILNFNK) are RCL. At Ser-377 the chain carries Phosphoserine.

It belongs to the serpin family. As to quaternary structure, interacts with CELA2A. Interacts with ERGIC3 and LMAN1/ERGIC53. Interacts with PRSS1/Trypsin. As to expression, expressed not only in liver but also in kidney tubule cells, where it is regulated by androgens during development.

The protein resides in the secreted. Its function is as follows. Inhibitor of serine proteases. Its primary target is elastase, but it also has a moderate affinity for plasmin and thrombin. The protein is Alpha-1-antiproteinase (Serpina1) of Mus caroli (Ryukyu mouse).